Consider the following 284-residue polypeptide: MDSYYKNKKKINFSKMHGLKNDFMVINCIKKNVFLTSHIIKKLSNRYTGIGFDQLLLVEKSNSLLTDFHYRIFNANGNEVEQCGNGARCFGLFLLLKGLTNKKKILISTKKKPLTIEFLTENMIKVNMNEPDFKFYNLSSLQNVLDNNFSIKLMNENLICNLVSIGNPHCIIKVQSVKNAPVNIIGDSIEKNPIFPEGVNVSFMEILNKKHIKLRVYERNVGETKACGSAACAAVAVGIAQKLLSDTVHVELLGGKLIIIWKGFGTPLYMVGPAKHVYDGYIYI.

Positions 21, 54, and 74 each coordinate substrate. Residue C83 is the Proton donor of the active site. Substrate is bound by residues 84–85 (GN), N167, N200, and 218–219 (ER). C227 acts as the Proton acceptor in catalysis. 228-229 (GS) provides a ligand contact to substrate.

Belongs to the diaminopimelate epimerase family. In terms of assembly, homodimer.

It is found in the cytoplasm. It carries out the reaction (2S,6S)-2,6-diaminopimelate = meso-2,6-diaminopimelate. It functions in the pathway amino-acid biosynthesis; L-lysine biosynthesis via DAP pathway; DL-2,6-diaminopimelate from LL-2,6-diaminopimelate: step 1/1. Functionally, catalyzes the stereoinversion of LL-2,6-diaminopimelate (L,L-DAP) to meso-diaminopimelate (meso-DAP), a precursor of L-lysine and an essential component of the bacterial peptidoglycan. This chain is Diaminopimelate epimerase, found in Buchnera aphidicola subsp. Acyrthosiphon pisum (strain APS) (Acyrthosiphon pisum symbiotic bacterium).